A 31-amino-acid chain; its full sequence is Cytochrome b6-f complex subunit 6 (31 aa).

A helical membrane pass occupies residues 4 to 24 (IFSYIALLLSALVITLTCYIG).

It belongs to the PetL family. The 4 large subunits of the cytochrome b6-f complex are cytochrome b6, subunit IV (17 kDa polypeptide, PetD), cytochrome f and the Rieske protein, while the 4 small subunits are PetG, PetL, PetM and PetN. The complex functions as a dimer.

The protein resides in the plastid. It is found in the chloroplast thylakoid membrane. Component of the cytochrome b6-f complex, which mediates electron transfer between photosystem II (PSII) and photosystem I (PSI), cyclic electron flow around PSI, and state transitions. PetL is important for photoautotrophic growth as well as for electron transfer efficiency and stability of the cytochrome b6-f complex. This Chlorella vulgaris (Green alga) protein is Cytochrome b6-f complex subunit 6.